The following is a 379-amino-acid chain: Chaperone protein DnaJ (379 aa).

One can recognise a J domain in the interval 4-69; sequence DLYETLGVKK…QKRAAYDRYG (66 aa). The segment at 137 to 215 adopts a CR-type zinc-finger fold; sequence GKTAQIRVPT…CHGQGRVTEE (79 aa). Zn(2+) is bound by residues Cys-150, Cys-153, Cys-167, Cys-170, Cys-189, Cys-192, Cys-203, and Cys-206. CXXCXGXG motif repeat units follow at residues 150–157, 167–174, 189–196, and 203–210; these read CDVCTGSG, CATCQGSG, CPTCGGRG, and CTKCHGQG.

It belongs to the DnaJ family. In terms of assembly, homodimer. It depends on Zn(2+) as a cofactor.

It is found in the cytoplasm. Participates actively in the response to hyperosmotic and heat shock by preventing the aggregation of stress-denatured proteins and by disaggregating proteins, also in an autonomous, DnaK-independent fashion. Unfolded proteins bind initially to DnaJ; upon interaction with the DnaJ-bound protein, DnaK hydrolyzes its bound ATP, resulting in the formation of a stable complex. GrpE releases ADP from DnaK; ATP binding to DnaK triggers the release of the substrate protein, thus completing the reaction cycle. Several rounds of ATP-dependent interactions between DnaJ, DnaK and GrpE are required for fully efficient folding. Also involved, together with DnaK and GrpE, in the DNA replication of plasmids through activation of initiation proteins. The chain is Chaperone protein DnaJ from Sinorhizobium fredii (strain NBRC 101917 / NGR234).